Reading from the N-terminus, the 294-residue chain is Protoheme IX farnesyltransferase (294 aa).

Transmembrane regions (helical) follow at residues 25-45 (SLVLVTAAGGMWLAPGHMGAV), 48-68 (LVTLLATAGTVGAANALNCYW), 92-112 (AVALWFGISLAAVSLPALALG), 115-135 (VLTAALGLVALLSYVLAYTPL), 141-161 (AAMLVGGVPGALPPLMGWTAV), 170-190 (FSLFAIMFLWQMPHFIAIALF), 216-236 (VVLYLVALIPMTLLPFQLHIA), 240-260 (YLAAAVLLGLSFLGLGAWGFF), and 272-292 (FFFSLIYLTGLFAALALDRVP).

Belongs to the UbiA prenyltransferase family. Protoheme IX farnesyltransferase subfamily.

The protein resides in the cell inner membrane. It catalyses the reaction heme b + (2E,6E)-farnesyl diphosphate + H2O = Fe(II)-heme o + diphosphate. It participates in porphyrin-containing compound metabolism; heme O biosynthesis; heme O from protoheme: step 1/1. Converts heme B (protoheme IX) to heme O by substitution of the vinyl group on carbon 2 of heme B porphyrin ring with a hydroxyethyl farnesyl side group. The sequence is that of Protoheme IX farnesyltransferase from Myxococcus xanthus (strain DK1622).